We begin with the raw amino-acid sequence, 83 residues long: MSSGGLLLLLGLLTLWEVLTPVSSKDRPEFCELPADSGSCKGNFQAFYYNPVQHQCLEFIYGGCDGNANNFKTIDECKRTCAA.

Residues 1 to 24 form the signal peptide; that stretch reads MSSGGLLLLLGLLTLWEVLTPVSS. One can recognise a BPTI/Kunitz inhibitor domain in the interval 31–81; that stretch reads CELPADSGSCKGNFQAFYYNPVQHQCLEFIYGGCDGNANNFKTIDECKRTC. Disulfide bonds link cysteine 31/cysteine 81, cysteine 40/cysteine 64, and cysteine 56/cysteine 77.

This sequence belongs to the venom Kunitz-type family. Expressed by the venom gland.

The protein resides in the secreted. Its function is as follows. Serine protease inhibitor. This chain is Kunitz-type serine protease inhibitor superbin-3, found in Austrelaps superbus (Lowland copperhead snake).